Consider the following 394-residue polypeptide: Elongation factor Tu (394 aa).

The 195-residue stretch at 10–204 folds into the tr-type G domain; the sequence is KLHINVGTIG…VLDSYIPEPK (195 aa). Positions 19 to 26 are G1; that stretch reads GHVDHGKT. 19 to 26 is a binding site for GTP; sequence GHVDHGKT. Mg(2+) is bound at residue T26. Residues 60–64 are G2; the sequence is GITIN. The segment at 81–84 is G3; it reads DCPG. GTP-binding positions include 81–85 and 136–139; these read DCPGH and NKCD. Residues 136-139 form a G4 region; that stretch reads NKCD. Positions 174–176 are G5; it reads SAL.

The protein belongs to the TRAFAC class translation factor GTPase superfamily. Classic translation factor GTPase family. EF-Tu/EF-1A subfamily. As to quaternary structure, monomer.

Its subcellular location is the cytoplasm. It carries out the reaction GTP + H2O = GDP + phosphate + H(+). In terms of biological role, GTP hydrolase that promotes the GTP-dependent binding of aminoacyl-tRNA to the A-site of ribosomes during protein biosynthesis. The sequence is that of Elongation factor Tu from Baumannia cicadellinicola subsp. Homalodisca coagulata.